A 100-amino-acid chain; its full sequence is Urease subunit gamma (100 aa).

This sequence belongs to the urease gamma subunit family. Heterotrimer of UreA (gamma), UreB (beta) and UreC (alpha) subunits. Three heterotrimers associate to form the active enzyme.

Its subcellular location is the cytoplasm. It carries out the reaction urea + 2 H2O + H(+) = hydrogencarbonate + 2 NH4(+). The protein operates within nitrogen metabolism; urea degradation; CO(2) and NH(3) from urea (urease route): step 1/1. The chain is Urease subunit gamma from Corynebacterium urealyticum (strain ATCC 43042 / DSM 7109).